Reading from the N-terminus, the 573-residue chain is MHALTGLSLVSLLSFGYLSWDWAKPSLVADGPGEPGLEQPSAPPPQPPHIIFILTDDQGYHDVGYHGSDIETPTLDRLAAEGVKLENYYIQPICTPSRSQLLTGRYQIHTGLQHSIIRPRQPNCLPLDQVTLPQKLQEAGYSTHMVGKWHLGFYRKECLPTRRGFDTFLGSLTGNVDYYTYDNCDGPGVCGFDLHEGENVAWGLSGQYSTMLYAQRVSHILASHSPRRPLFLYVAFQAVHTPLQSPREYLYRYRTMGNVARRKYAAMVTCMDEAVRNITSALKRYGFYNNSVIIFSSDNGGQTFSGGSNWPLRGRKGTYWEGGVRGLGFVHSPLLKRKRRTSRALVHITDWYPTLVGLAGGTASAADGLDGYDVWPAISEGRASPRTEILHNIDPLYNHARHGSLEAGFGIWNTAVQAAIRVGEWKLLTGDPGYGDWIPPQTLAAFPGSWWNLERMASARQAVWLFNISADPYEREDLAGQRPDVVRALLARLVDYNRTAIPVRYPAENPRAHPDFNGGAWGPWASDEEEEEEEEEAGRARSFSRGRRKKKCKICKLRSFFRKLNTRLMSQRI.

The N-terminal stretch at 1–23 is a signal peptide; sequence MHALTGLSLVSLLSFGYLSWDWA. Residues aspartate 56, aspartate 57, and cysteine 94 each contribute to the Ca(2+) site. The active-site Nucleophile is the cysteine 94. 3-oxoalanine (Cys) is present on cysteine 94. Residue lysine 148 participates in substrate binding. Histidine 150 is a catalytic residue. Histidine 240 serves as a coordination point for substrate. Residues asparagine 277 and asparagine 289 are each glycosylated (N-linked (GlcNAc...) asparagine). 2 residues coordinate Ca(2+): aspartate 298 and asparagine 299. Lysine 316 provides a ligand contact to substrate. 2 N-linked (GlcNAc...) asparagine glycosylation sites follow: asparagine 467 and asparagine 497. Residues 516–550 form a disordered region; that stretch reads FNGGAWGPWASDEEEEEEEEEAGRARSFSRGRRKK. A compositionally biased stretch (acidic residues) spans 526–536; that stretch reads SDEEEEEEEEE.

Belongs to the sulfatase family. Ca(2+) serves as cofactor. Post-translationally, the oxidation of Cys-94 residue to 3-oxoalanine (also known as C(alpha)-formylglycine) by SUMF1/Sulfatase-modifying factor 1, seems critical for catalytic activity.

The protein localises to the secreted. It localises to the endoplasmic reticulum. Displays arylsulfatase activity at neutral pH, when co-expressed with SUMF1; arylsulfatase activity is measured in the secretion medium of retinal cell line, but no activity is recorded when measured in cell extracts. The chain is Arylsulfatase I (ARSI) from Canis lupus familiaris (Dog).